Consider the following 314-residue polypeptide: Vacuolar membrane protein VL3_4134 (314 aa).

The interval 32–60 (KPTSSVVSETSSKSLPSLTSSAFSTSSGA) is disordered. A helical membrane pass occupies residues 93–113 (VYIAVGAVIGAIFISILIWWL). 3 positions are modified to phosphoserine: serine 148, serine 254, and serine 274. The disordered stretch occupies residues 240-309 (EERKLNLNRP…PSMFLDDVLN (70 aa)). A compositionally biased stretch (basic and acidic residues) spans 254–269 (SPERKEKKINSMEGYH).

The protein belongs to the PRM5 family.

It is found in the vacuole membrane. The sequence is that of Vacuolar membrane protein VL3_4134 from Saccharomyces cerevisiae (strain Zymaflore VL3) (Baker's yeast).